The chain runs to 239 residues: Serine protease SplD (239 aa).

Positions methionine 1–alanine 36 are cleaved as a signal peptide. Catalysis depends on charge relay system residues histidine 75, aspartate 114, and serine 192.

It belongs to the peptidase S1B family.

It is found in the secreted. The protein is Serine protease SplD (splD) of Staphylococcus aureus (strain Mu3 / ATCC 700698).